A 318-amino-acid polypeptide reads, in one-letter code: tRNA U34 carboxymethyltransferase (318 aa).

Residues lysine 88, tryptophan 102, lysine 107, glycine 126, methionine 192, tyrosine 196, and arginine 311 each coordinate carboxy-S-adenosyl-L-methionine.

It belongs to the class I-like SAM-binding methyltransferase superfamily. CmoB family. Homotetramer.

The catalysed reaction is carboxy-S-adenosyl-L-methionine + 5-hydroxyuridine(34) in tRNA = 5-carboxymethoxyuridine(34) in tRNA + S-adenosyl-L-homocysteine + H(+). Catalyzes carboxymethyl transfer from carboxy-S-adenosyl-L-methionine (Cx-SAM) to 5-hydroxyuridine (ho5U) to form 5-carboxymethoxyuridine (cmo5U) at position 34 in tRNAs. This chain is tRNA U34 carboxymethyltransferase, found in Pseudomonas fluorescens (strain Pf0-1).